A 393-amino-acid polypeptide reads, in one-letter code: N-acyl-phosphatidylethanolamine-hydrolyzing phospholipase D (393 aa).

Position 1 is an N-acetylmethionine (Met-1). Positions Met-1–Tyr-16 are enriched in polar residues. A disordered region spans residues Met-1–Ser-40. Zn(2+) contacts are provided by His-185 and His-187. Residue Tyr-188 coordinates an N-acyl-1,2-diacyl-sn-glycero-3-phosphoethanolamine. Residues Asp-189, His-190, and His-253 each coordinate Zn(2+). The deoxycholate site is built by Lys-256 and Met-260. Asp-284 is a Zn(2+) binding site. Residue His-321 participates in an N-acyl-1,2-diacyl-sn-glycero-3-phosphoethanolamine binding. His-343 lines the Zn(2+) pocket. Ala-348 lines the deoxycholate pocket.

It belongs to the NAPE-PLD family. Homodimer. Bile acids promote the assembly of inactive monomers into an active dimer and enable catalysis. Zn(2+) serves as cofactor. As to expression, widely expressed. Highest expression in brain, kidney and testis (at protein level). Expressed in adipose tissue (at protein level).

The protein localises to the golgi apparatus membrane. The protein resides in the early endosome membrane. It localises to the nucleus envelope. It is found in the nucleus. Its subcellular location is the nucleoplasm. It catalyses the reaction an N-acyl-1,2-diacyl-sn-glycero-3-phosphoethanolamine + H2O = an N-acylethanolamine + a 1,2-diacyl-sn-glycero-3-phosphate + H(+). The enzyme catalyses N-butanoyl-1-hexadecanoyl-2-(9Z,12Z-octadecadienoyl)-sn-glycero-3-phosphoethanolamine + H2O = N-butanoyl ethanolamine + 1-hexadecanoyl-2-(9Z,12Z-octadecadienoyl)-sn-glycero-3-phosphate + H(+). It carries out the reaction N-hexanoyl-1-hexadecanoyl-2-(9Z,12Z-octadecadienoyl)-sn-glycero-3-phosphoethanolamine + H2O = N-hexanoyl ethanolamine + 1-hexadecanoyl-2-(9Z,12Z-octadecadienoyl)-sn-glycero-3-phosphate + H(+). The catalysed reaction is N-octanoyl-1-hexadecanoyl-2-(9Z,12Z-octadecadienoyl)-sn-glycero-3-phosphoethanolamine + H2O = N-octanoyl ethanolamine + 1-hexadecanoyl-2-(9Z,12Z-octadecadienoyl)-sn-glycero-3-phosphate + H(+). It catalyses the reaction N-decanoyl-1-hexadecanoyl-2-(9Z,12Z-octadecadienoyl)-sn-glycero-3-phosphoethanolamine + H2O = N-decanoyl ethanolamine + 1-hexadecanoyl-2-(9Z,12Z-octadecadienoyl)-sn-glycero-3-phosphate + H(+). The enzyme catalyses N-dodecanoyl-1,2-di-(9Z-octadecenoyl)-sn-glycero-3-phosphoethanolamine + H2O = N-dodecanoylethanolamine + 1,2-di-(9Z-octadecenoyl)-sn-glycero-3-phosphate + H(+). It carries out the reaction N-tetradecanoyl-1,2-di-(9Z-octadecenoyl)-sn-glycero-3-phosphoethanolamine + H2O = N-tetradecanoylethanolamine + 1,2-di-(9Z-octadecenoyl)-sn-glycero-3-phosphate + H(+). The catalysed reaction is N-hexadecanoyl-1,2-di-(9Z-octadecenoyl)-sn-glycero-3-phosphoethanolamine + H2O = N-hexadecanoylethanolamine + 1,2-di-(9Z-octadecenoyl)-sn-glycero-3-phosphate + H(+). It catalyses the reaction N,1-dihexadecanoyl-2-(9Z,12Z-octadecadienoyl)-sn-glycero-3-phosphoethanolamine + H2O = 1-hexadecanoyl-2-(9Z,12Z-octadecadienoyl)-sn-glycero-3-phosphate + N-hexadecanoylethanolamine + H(+). The enzyme catalyses N-octadecanoyl-1,2-di-(9Z-octadecenoyl)-sn-glycero-3-phosphoethanolamine + H2O = N-octadecanoyl ethanolamine + 1,2-di-(9Z-octadecenoyl)-sn-glycero-3-phosphate + H(+). It carries out the reaction N,1,2-tri-(9Z-octadecenoyl)-sn-glycero-3-phosphoethanolamine + H2O = N-(9Z-octadecenoyl) ethanolamine + 1,2-di-(9Z-octadecenoyl)-sn-glycero-3-phosphate + H(+). The catalysed reaction is N-(5Z,8Z,11Z,14Z-eicosatetraenoyl)-1,2-diacyl-sn-glycero-3-phosphoethanolamine + H2O = N-(5Z,8Z,11Z,14Z-eicosatetraenoyl)-ethanolamine + a 1,2-diacyl-sn-glycero-3-phosphate + H(+). It catalyses the reaction N-(5Z,8Z,11Z,14Z-eicosatetraenoyl)-1,2-di-(9Z-octadecenoyl)-sn-glycero-3-phosphoethanolamine + H2O = N-(5Z,8Z,11Z,14Z-eicosatetraenoyl)-ethanolamine + 1,2-di-(9Z-octadecenoyl)-sn-glycero-3-phosphate + H(+). The enzyme catalyses 1-O-(1Z-octadecenoyl)-2-(9Z-octadecenoyl)-sn-glycero-3-phospho-N-hexadecanoyl-ethanolamine + H2O = 1-O-(1Z-octadecenoyl)-2-(9Z-octadecenoyl)-sn-glycero-3-phosphate + N-hexadecanoylethanolamine + H(+). It carries out the reaction N,1-diacyl-sn-glycero-3-phosphoethanolamine + H2O = an N-acylethanolamine + a 1-acyl-sn-glycero-3-phosphate + H(+). The catalysed reaction is N,1-dihexadecanoyl-sn-glycero-3-phosphoethanolamine + H2O = N-hexadecanoylethanolamine + 1-hexadecanoyl-sn-glycero-3-phosphate + H(+). It catalyses the reaction N-(5Z,8Z,11Z,14Z-eicosatetraenoyl)-1-(9Z-octadecenoyl)-sn-glycero-3-phosphoethanolamine + H2O = N-(5Z,8Z,11Z,14Z-eicosatetraenoyl)-ethanolamine + 1-(9Z-octadecenoyl)-sn-glycero-3-phosphate + H(+). Activated by divalent cations. Activated by bile acids. D-type phospholipase that hydrolyzes N-acyl-phosphatidylethanolamines (NAPEs) to produce bioactive N-acylethanolamines/fatty acid ethanolamides (NAEs/FAEs) and phosphatidic acid. Cleaves the terminal phosphodiester bond of diacyl- and alkenylacyl-NAPEs, primarily playing a role in the generation of long-chain saturated and monounsaturated NAEs in the brain. May control NAPE homeostasis in dopaminergic neuron membranes and regulate neuron survival, partly through RAC1 activation. As a regulator of lipid metabolism in the adipose tissue, mediates the crosstalk between adipocytes, gut microbiota and immune cells to control body temperature and weight. In particular, regulates energy homeostasis by promoting cold-induced brown or beige adipocyte differentiation program to generate heat from fatty acids and glucose. Has limited D-type phospholipase activity toward N-acyl lyso-NAPEs. In Pongo abelii (Sumatran orangutan), this protein is N-acyl-phosphatidylethanolamine-hydrolyzing phospholipase D (NAPEPLD).